The sequence spans 255 residues: 1-(5-phosphoribosyl)-5-[(5-phosphoribosylamino)methylideneamino] imidazole-4-carboxamide isomerase (255 aa).

D8 functions as the Proton acceptor in the catalytic mechanism. The active-site Proton donor is the D129.

This sequence belongs to the HisA/HisF family.

It is found in the cytoplasm. It catalyses the reaction 1-(5-phospho-beta-D-ribosyl)-5-[(5-phospho-beta-D-ribosylamino)methylideneamino]imidazole-4-carboxamide = 5-[(5-phospho-1-deoxy-D-ribulos-1-ylimino)methylamino]-1-(5-phospho-beta-D-ribosyl)imidazole-4-carboxamide. The protein operates within amino-acid biosynthesis; L-histidine biosynthesis; L-histidine from 5-phospho-alpha-D-ribose 1-diphosphate: step 4/9. The sequence is that of 1-(5-phosphoribosyl)-5-[(5-phosphoribosylamino)methylideneamino] imidazole-4-carboxamide isomerase from Synechococcus sp. (strain CC9902).